Here is a 299-residue protein sequence, read N- to C-terminus: Urease accessory protein UreD (299 aa).

Belongs to the UreD family. As to quaternary structure, ureD, UreF and UreG form a complex that acts as a GTP-hydrolysis-dependent molecular chaperone, activating the urease apoprotein by helping to assemble the nickel containing metallocenter of UreC. The UreE protein probably delivers the nickel.

The protein localises to the cytoplasm. Its function is as follows. Required for maturation of urease via the functional incorporation of the urease nickel metallocenter. This Prochlorococcus marinus (strain MIT 9303) protein is Urease accessory protein UreD.